Reading from the N-terminus, the 122-residue chain is MIQMQSNLDVADNSGAKRVQCIKVLGGSKRRTASVGDVIVVSVKEAQPRAKVKKGDVHRAVIVRTKKDVRRPDGSVIRFDSNAAVLVSKNEEPIGTRIFGPVVRELRGRGFMKIISLAPEVL.

This sequence belongs to the universal ribosomal protein uL14 family. Part of the 50S ribosomal subunit. Forms a cluster with proteins L3 and L19. In the 70S ribosome, L14 and L19 interact and together make contacts with the 16S rRNA in bridges B5 and B8.

In terms of biological role, binds to 23S rRNA. Forms part of two intersubunit bridges in the 70S ribosome. This chain is Large ribosomal subunit protein uL14, found in Erythrobacter litoralis (strain HTCC2594).